Reading from the N-terminus, the 190-residue chain is Ion-translocating oxidoreductase complex subunit B (190 aa).

Residues 1–26 (MTALWIAIAALSALGLLFGLVLGYAA) are hydrophobic. A 4Fe-4S domain is found at 32 to 90 (EEDPVAEQVDEILPQSQCGQCGYPGCRPYAEAVANGEMINKCAPGGEQVMLKLAELLNV). Residues Cys49, Cys52, Cys57, Cys73, Cys115, Cys118, Cys121, Cys125, Cys145, Cys148, Cys151, and Cys155 each contribute to the [4Fe-4S] cluster site. 2 4Fe-4S ferredoxin-type domains span residues 106-135 (QVAY…GATR) and 136-165 (AMHT…MRPV).

Belongs to the 4Fe4S bacterial-type ferredoxin family. RnfB subfamily. The complex is composed of six subunits: RnfA, RnfB, RnfC, RnfD, RnfE and RnfG. The cofactor is [4Fe-4S] cluster.

It localises to the cell inner membrane. Its function is as follows. Part of a membrane-bound complex that couples electron transfer with translocation of ions across the membrane. In Serratia proteamaculans (strain 568), this protein is Ion-translocating oxidoreductase complex subunit B.